Consider the following 311-residue polypeptide: tRNA-cytidine(32) 2-sulfurtransferase (311 aa).

The PP-loop motif motif lies at 47 to 52 (SGGKDS). Cys122, Cys125, and Cys213 together coordinate [4Fe-4S] cluster.

This sequence belongs to the TtcA family. Homodimer. It depends on Mg(2+) as a cofactor. [4Fe-4S] cluster is required as a cofactor.

The protein localises to the cytoplasm. It catalyses the reaction cytidine(32) in tRNA + S-sulfanyl-L-cysteinyl-[cysteine desulfurase] + AH2 + ATP = 2-thiocytidine(32) in tRNA + L-cysteinyl-[cysteine desulfurase] + A + AMP + diphosphate + H(+). It participates in tRNA modification. In terms of biological role, catalyzes the ATP-dependent 2-thiolation of cytidine in position 32 of tRNA, to form 2-thiocytidine (s(2)C32). The sulfur atoms are provided by the cysteine/cysteine desulfurase (IscS) system. The sequence is that of tRNA-cytidine(32) 2-sulfurtransferase from Escherichia coli O81 (strain ED1a).